The sequence spans 443 residues: ATP-dependent protease ATPase subunit HslU (443 aa).

Residues Val-18, 60–65 (GVGKTE), Asp-255, Glu-321, and Arg-393 contribute to the ATP site.

Belongs to the ClpX chaperone family. HslU subfamily. A double ring-shaped homohexamer of HslV is capped on each side by a ring-shaped HslU homohexamer. The assembly of the HslU/HslV complex is dependent on binding of ATP.

The protein resides in the cytoplasm. In terms of biological role, ATPase subunit of a proteasome-like degradation complex; this subunit has chaperone activity. The binding of ATP and its subsequent hydrolysis by HslU are essential for unfolding of protein substrates subsequently hydrolyzed by HslV. HslU recognizes the N-terminal part of its protein substrates and unfolds these before they are guided to HslV for hydrolysis. This chain is ATP-dependent protease ATPase subunit HslU, found in Colwellia psychrerythraea (strain 34H / ATCC BAA-681) (Vibrio psychroerythus).